We begin with the raw amino-acid sequence, 413 residues long: PAB1-binding protein 2 (413 aa).

A compositionally biased stretch (low complexity) spans Met1–Thr23. Positions Met1–Gln36 are disordered. 3 consecutive KH domains span residues Asp66–Ile130, Glu148–Ile213, and Phe330–Ile394.

As to quaternary structure, interacts with PAB1.

It is found in the nucleus. The sequence is that of PAB1-binding protein 2 (PBP2) from Saccharomyces cerevisiae (strain ATCC 204508 / S288c) (Baker's yeast).